The primary structure comprises 590 residues: Sulfoacetaldehyde acetyltransferase (590 aa).

Belongs to the TPP enzyme family. It depends on Mg(2+) as a cofactor. Thiamine diphosphate serves as cofactor.

The protein resides in the cytoplasm. The catalysed reaction is acetyl phosphate + sulfite + H(+) = sulfoacetaldehyde + phosphate. It participates in organosulfur degradation; taurine degradation via aerobic pathway; acetyl phosphate and sulfite from taurine: step 2/2. The chain is Sulfoacetaldehyde acetyltransferase from Rhodobacter capsulatus (strain ATCC BAA-309 / NBRC 16581 / SB1003).